A 1118-amino-acid polypeptide reads, in one-letter code: Cytospin-A (1118 aa).

2 disordered regions span residues 1-157 and 198-221; these read MKKS…DGQI and GGKELQEGPEEEEEEEEEEKPHVS. 2 stretches are compositionally biased toward polar residues: residues 57 to 102 and 112 to 123; these read NPTS…TKET and SRASANKKQSAA. Residues 144 to 153 are compositionally biased toward basic and acidic residues; the sequence is SESRMSKSKS. Residues 204 to 215 show a composition bias toward acidic residues; it reads EGPEEEEEEEEE. Residues 225–264 are a coiled coil; sequence AADVESTLILLQEQNQAIREELNLLKSENRMLKDRLNALG. The interval 289–379 is disordered; the sequence is AGSGQSDGGG…RRGSSGNASE (91 aa). A compositionally biased stretch (low complexity) spans 343 to 363; it reads SSDDALDAPSGASSSSESECA. 2 coiled-coil regions span residues 384–438 and 475–796; these read CLTE…MDSL and GRYM…RGRV. Disordered regions lie at residues 771–790, 837–876, and 920–1001; these read QEKNEKLSKELEEVKSRKQD, FDSASQGPPSNGASVTPTVSAAPLPRTPLSPSPMKTPPAA, and SAAS…ERKD. Polar residues predominate over residues 838 to 855; that stretch reads DSASQGPPSNGASVTPTV. The span at 861-872 shows a compositional bias: pro residues; that stretch reads PRTPLSPSPMKT. A compositionally biased stretch (polar residues) spans 930–945; that stretch reads QRVSNMDSTKTISVSR. Positions 946–956 are enriched in basic and acidic residues; the sequence is RSSEEMKRDMS. Over residues 961-986 the composition is skewed to low complexity; the sequence is ASSTSLMAMSAASAPLSLSSSSPTAS. The region spanning 1012-1117 is the Calponin-homology (CH) domain; it reads GSKRNALLKW…YVTAIYKYFE (106 aa).

This sequence belongs to the cytospin-A family. As to quaternary structure, may interact with both microtubules and actin cytoskeleton.

Its subcellular location is the cytoplasm. It is found in the cytoskeleton. It localises to the spindle. The protein resides in the cell junction. The protein localises to the gap junction. In terms of biological role, involved in cytokinesis and spindle organization. May play a role in actin cytoskeleton organization and microtubule stabilization and hence required for proper cell adhesion and migration. The protein is Cytospin-A (specc1l) of Takifugu rubripes (Japanese pufferfish).